We begin with the raw amino-acid sequence, 227 residues long: MSDINLDWVDRRQLQRLEEMLIVVDENDKVIGADTKRNCHLNENIEKGLLHRAFSVVLFNTKNRILIQQRSDTKVTFPGYFTDSCSSHPLYNPAELEEKDAIGVRRAAQRRLQAELGIPGEQISPEDIVFMTIYHHKAKSDRIWGEHEICYLLLVRKNVTLNPDPSETKSILYLSQEELWELLEREARGEVKVTPWLRTIAERFLYRWWPHLDDVTPFVELHKIHRV.

Lys-36 serves as a coordination point for substrate. 2 residues coordinate Mg(2+): His-40 and His-51. In terms of domain architecture, Nudix hydrolase spans 49–199; sequence LLHRAFSVVL…EVKVTPWLRT (151 aa). The substrate site is built by Arg-70 and Lys-74. Residue Ser-86 is part of the active site. Ser-87 contributes to the substrate binding site. Mg(2+) contacts are provided by Glu-146 and Glu-148. Glu-148 is an active-site residue. The short motif at 225-227 is the Microbody targeting signal element; the sequence is HRV.

This sequence belongs to the IPP isomerase type 1 family. Mg(2+) is required as a cofactor. In terms of tissue distribution, muscle-specific expression.

It localises to the peroxisome. The enzyme catalyses isopentenyl diphosphate = dimethylallyl diphosphate. Its pathway is isoprenoid biosynthesis; dimethylallyl diphosphate biosynthesis; dimethylallyl diphosphate from isopentenyl diphosphate: step 1/1. Its function is as follows. Catalyzes the 1,3-allylic rearrangement of the homoallylic substrate isopentenyl (IPP) to its highly electrophilic allylic isomer, dimethylallyl diphosphate (DMAPP). The chain is Isopentenyl-diphosphate delta-isomerase 2 (IDI2) from Homo sapiens (Human).